The primary structure comprises 262 residues: Light-harvesting complex-like protein 3 isotype 1, chloroplastic (262 aa).

The N-terminal 39 residues, 1-39, are a transit peptide targeting the chloroplast; the sequence is MALFSPPISSSSLQNPNFIPKFSFSLLSSNRFSLLSVTR. 2 consecutive transmembrane segments (helical) span residues 180 to 200 and 202 to 222; these read AAMI…VGLV and QMGN…VLFI.

Interacts with GGR. Forms homodimer, and heterodimer with LIL3.2. Expressed in photosynthetically active tissues (at protein level).

Its subcellular location is the plastid. The protein resides in the chloroplast thylakoid membrane. Light-harvesting-like protein required for biosynthesis of phytylated chlorophylls and alpha-tocopherol in green seedlings. Functions by anchoring geranylgeranyl reductase (GGR) in the thylakoid membrane, leading to the stabilization of GGR activity. Binds chlorophyll a in the thylakoid membrane. Plays a role in the regulation of chlorophyll biosynthesis under light stress and under standard growth conditions. This Arabidopsis thaliana (Mouse-ear cress) protein is Light-harvesting complex-like protein 3 isotype 1, chloroplastic (LIL3.1).